Here is a 260-residue protein sequence, read N- to C-terminus: Phosphatidate cytidylyltransferase (260 aa).

The next 7 helical transmembrane spans lie at 9–29 (IIALLIFLPILLKGGLILMLF), 46–66 (MIKFLSIPGLISALALIIIML), 70–90 (AGEWVQVIQLKGLIAMSFIVL), 102–122 (FMDAAFCLMSVAYVGIGFMYF), 130–150 (LRYILFAFLIVWLTDTGAYIF), 172–192 (FFGGILCSILVPLVMQMFVDL), and 196–216 (IWLLLLVTIVLSMFGQLGDLV).

The protein belongs to the CDS family.

Its subcellular location is the cell membrane. It carries out the reaction a 1,2-diacyl-sn-glycero-3-phosphate + CTP + H(+) = a CDP-1,2-diacyl-sn-glycerol + diphosphate. The protein operates within phospholipid metabolism; CDP-diacylglycerol biosynthesis; CDP-diacylglycerol from sn-glycerol 3-phosphate: step 3/3. This chain is Phosphatidate cytidylyltransferase (cdsA), found in Staphylococcus epidermidis (strain ATCC 35984 / DSM 28319 / BCRC 17069 / CCUG 31568 / BM 3577 / RP62A).